A 173-amino-acid chain; its full sequence is Shikimate kinase (173 aa).

11–16 contributes to the ATP binding site; sequence GAGKTT. Thr-15 provides a ligand contact to Mg(2+). Asp-33, Arg-57, and Gly-79 together coordinate substrate. Arg-118 is an ATP binding site. Arg-140 contributes to the substrate binding site.

The protein belongs to the shikimate kinase family. Monomer. The cofactor is Mg(2+).

The protein resides in the cytoplasm. It carries out the reaction shikimate + ATP = 3-phosphoshikimate + ADP + H(+). It participates in metabolic intermediate biosynthesis; chorismate biosynthesis; chorismate from D-erythrose 4-phosphate and phosphoenolpyruvate: step 5/7. Functionally, catalyzes the specific phosphorylation of the 3-hydroxyl group of shikimic acid using ATP as a cosubstrate. This chain is Shikimate kinase, found in Parabacteroides distasonis (strain ATCC 8503 / DSM 20701 / CIP 104284 / JCM 5825 / NCTC 11152).